The sequence spans 426 residues: Glutamate-1-semialdehyde 2,1-aminomutase (426 aa).

At K265 the chain carries N6-(pyridoxal phosphate)lysine.

The protein belongs to the class-III pyridoxal-phosphate-dependent aminotransferase family. HemL subfamily. Homodimer. The cofactor is pyridoxal 5'-phosphate.

It is found in the cytoplasm. It catalyses the reaction (S)-4-amino-5-oxopentanoate = 5-aminolevulinate. It participates in porphyrin-containing compound metabolism; protoporphyrin-IX biosynthesis; 5-aminolevulinate from L-glutamyl-tRNA(Glu): step 2/2. The sequence is that of Glutamate-1-semialdehyde 2,1-aminomutase from Salmonella choleraesuis (strain SC-B67).